The sequence spans 573 residues: Pentatricopeptide repeat-containing protein At3g62890 (573 aa).

PPR repeat units lie at residues 23 to 60 (ESFL…RVSP), 61 to 95 (DFHT…GLDK), 96 to 126 (DPFV…SGSK), 127 to 161 (DLPA…NVIS), 162 to 188 (WSCL…MQLP), 198 to 232 (NEFT…HVEI), 233 to 263 (DIVL…LGSK), 265 to 295 (DVKA…MTTS), 301 to 336 (NSVT…GITP), and 337 to 367 (SIQH…MPME). A type E motif; degenerate region spans residues 372 to 447 (IWGSLLSGSR…VPGCSYVEVE (76 aa)). The interval 448-478 (GVVHEFVVGDESQQESERIYAMLDEIMQRLR) is type E(+) motif. The tract at residues 479–573 (EAGYVTDTKE…DGSCSCRDFW (95 aa)) is type DYW motif.

It belongs to the PPR family. PCMP-H subfamily.

This is Pentatricopeptide repeat-containing protein At3g62890 (PCMP-H82) from Arabidopsis thaliana (Mouse-ear cress).